A 218-amino-acid chain; its full sequence is Thiamine-phosphate synthase (218 aa).

Residues 45 to 49 (QYREK) and asparagine 77 contribute to the 4-amino-2-methyl-5-(diphosphooxymethyl)pyrimidine site. The Mg(2+) site is built by aspartate 78 and aspartate 97. Position 116 (serine 116) interacts with 4-amino-2-methyl-5-(diphosphooxymethyl)pyrimidine. 142-144 (TKT) lines the 2-[(2R,5Z)-2-carboxy-4-methylthiazol-5(2H)-ylidene]ethyl phosphate pocket. 4-amino-2-methyl-5-(diphosphooxymethyl)pyrimidine is bound at residue lysine 145. Residues glycine 173 and 193–194 (VT) each bind 2-[(2R,5Z)-2-carboxy-4-methylthiazol-5(2H)-ylidene]ethyl phosphate.

This sequence belongs to the thiamine-phosphate synthase family. Requires Mg(2+) as cofactor.

The catalysed reaction is 2-[(2R,5Z)-2-carboxy-4-methylthiazol-5(2H)-ylidene]ethyl phosphate + 4-amino-2-methyl-5-(diphosphooxymethyl)pyrimidine + 2 H(+) = thiamine phosphate + CO2 + diphosphate. The enzyme catalyses 2-(2-carboxy-4-methylthiazol-5-yl)ethyl phosphate + 4-amino-2-methyl-5-(diphosphooxymethyl)pyrimidine + 2 H(+) = thiamine phosphate + CO2 + diphosphate. It carries out the reaction 4-methyl-5-(2-phosphooxyethyl)-thiazole + 4-amino-2-methyl-5-(diphosphooxymethyl)pyrimidine + H(+) = thiamine phosphate + diphosphate. It participates in cofactor biosynthesis; thiamine diphosphate biosynthesis; thiamine phosphate from 4-amino-2-methyl-5-diphosphomethylpyrimidine and 4-methyl-5-(2-phosphoethyl)-thiazole: step 1/1. Its function is as follows. Condenses 4-methyl-5-(beta-hydroxyethyl)thiazole monophosphate (THZ-P) and 2-methyl-4-amino-5-hydroxymethyl pyrimidine pyrophosphate (HMP-PP) to form thiamine monophosphate (TMP). This Pelotomaculum thermopropionicum (strain DSM 13744 / JCM 10971 / SI) protein is Thiamine-phosphate synthase.